A 135-amino-acid chain; its full sequence is Small ribosomal subunit protein bS6 (135 aa).

Lysine 93 is subject to N6-acetyllysine. The tract at residues 98 to 135 (EASPMVKAKDERRERRDDFANETADDAEAGDSEEEEEE) is disordered. The segment covering 104 to 116 (KAKDERRERRDDF) has biased composition (basic and acidic residues). Over residues 120–135 (TADDAEAGDSEEEEEE) the composition is skewed to acidic residues.

This sequence belongs to the bacterial ribosomal protein bS6 family. Part of the 30S ribosomal subunit. Interacts weakly with uL2 in one of the 3.5 A resolved structures. In terms of processing, 5 different forms of the protein, varying only in the number of C-terminal glutamate residues, were isolated. The sequence shown is form bS6-6, which is the longest. The first two Glu are encoded by the rpsF gene, the other Glu are added post-translationally by the RimK enzyme.

Its function is as follows. Binds together with bS18 to 16S ribosomal RNA. This Escherichia coli (strain K12) protein is Small ribosomal subunit protein bS6 (rpsF).